A 476-amino-acid chain; its full sequence is Bifunctional protein HldE (476 aa).

Residues 1–319 (MAQYSAQFPH…NAIHGRTVSG (319 aa)) are ribokinase. 195-198 (NMSE) is a binding site for ATP. The active site involves Asp264. The tract at residues 344-476 (MTNGCFDILH…VIKKIRDLKD (133 aa)) is cytidylyltransferase.

This sequence in the N-terminal section; belongs to the carbohydrate kinase PfkB family. It in the C-terminal section; belongs to the cytidylyltransferase family. In terms of assembly, homodimer.

The enzyme catalyses D-glycero-beta-D-manno-heptose 7-phosphate + ATP = D-glycero-beta-D-manno-heptose 1,7-bisphosphate + ADP + H(+). It catalyses the reaction D-glycero-beta-D-manno-heptose 1-phosphate + ATP + H(+) = ADP-D-glycero-beta-D-manno-heptose + diphosphate. Its pathway is nucleotide-sugar biosynthesis; ADP-L-glycero-beta-D-manno-heptose biosynthesis; ADP-L-glycero-beta-D-manno-heptose from D-glycero-beta-D-manno-heptose 7-phosphate: step 1/4. It participates in nucleotide-sugar biosynthesis; ADP-L-glycero-beta-D-manno-heptose biosynthesis; ADP-L-glycero-beta-D-manno-heptose from D-glycero-beta-D-manno-heptose 7-phosphate: step 3/4. Its function is as follows. Catalyzes the phosphorylation of D-glycero-D-manno-heptose 7-phosphate at the C-1 position to selectively form D-glycero-beta-D-manno-heptose-1,7-bisphosphate. Catalyzes the ADP transfer from ATP to D-glycero-beta-D-manno-heptose 1-phosphate, yielding ADP-D-glycero-beta-D-manno-heptose. This Actinobacillus succinogenes (strain ATCC 55618 / DSM 22257 / CCUG 43843 / 130Z) protein is Bifunctional protein HldE.